A 505-amino-acid chain; its full sequence is Lysine--tRNA ligase (505 aa).

2 residues coordinate Mg(2+): Glu415 and Glu422.

It belongs to the class-II aminoacyl-tRNA synthetase family. In terms of assembly, homodimer. Mg(2+) serves as cofactor.

It is found in the cytoplasm. It carries out the reaction tRNA(Lys) + L-lysine + ATP = L-lysyl-tRNA(Lys) + AMP + diphosphate. The protein is Lysine--tRNA ligase of Escherichia coli O157:H7.